Here is a 363-residue protein sequence, read N- to C-terminus: Phospho-N-acetylmuramoyl-pentapeptide-transferase (363 aa).

Helical transmembrane passes span 3–23, 48–68, 83–103, 121–141, 159–179, 192–212, 234–254, 261–281, 286–306, and 340–360; these read QILF…PLLI, GTPT…YFLA, PTFS…VGFL, AKMI…LQFA, FGWT…ILAM, LATG…VWQF, PLDL…FLWW, IFMG…LAIC, LLMA…VIQV, and FWII…AGWA.

It belongs to the glycosyltransferase 4 family. MraY subfamily. It depends on Mg(2+) as a cofactor.

The protein resides in the cell membrane. It carries out the reaction UDP-N-acetyl-alpha-D-muramoyl-L-alanyl-gamma-D-glutamyl-meso-2,6-diaminopimeloyl-D-alanyl-D-alanine + di-trans,octa-cis-undecaprenyl phosphate = di-trans,octa-cis-undecaprenyl diphospho-N-acetyl-alpha-D-muramoyl-L-alanyl-D-glutamyl-meso-2,6-diaminopimeloyl-D-alanyl-D-alanine + UMP. It functions in the pathway cell wall biogenesis; peptidoglycan biosynthesis. Functionally, catalyzes the initial step of the lipid cycle reactions in the biosynthesis of the cell wall peptidoglycan: transfers peptidoglycan precursor phospho-MurNAc-pentapeptide from UDP-MurNAc-pentapeptide onto the lipid carrier undecaprenyl phosphate, yielding undecaprenyl-pyrophosphoryl-MurNAc-pentapeptide, known as lipid I. The sequence is that of Phospho-N-acetylmuramoyl-pentapeptide-transferase from Streptomyces coelicolor (strain ATCC BAA-471 / A3(2) / M145).